A 411-amino-acid polypeptide reads, in one-letter code: Acetate kinase (411 aa).

Residue Asn-7 coordinates Mg(2+). Lys-14 contributes to the ATP binding site. Arg-94 provides a ligand contact to substrate. Asp-151 (proton donor/acceptor) is an active-site residue. ATP contacts are provided by residues 211–215 (HLGNG), 285–287 (DMR), and 333–337 (GIGEN). Residue Glu-387 participates in Mg(2+) binding.

It belongs to the acetokinase family. Homodimer. Requires Mg(2+) as cofactor. The cofactor is Mn(2+).

It localises to the cytoplasm. It carries out the reaction acetate + ATP = acetyl phosphate + ADP. It functions in the pathway metabolic intermediate biosynthesis; acetyl-CoA biosynthesis; acetyl-CoA from acetate: step 1/2. Its function is as follows. Catalyzes the formation of acetyl phosphate from acetate and ATP. Can also catalyze the reverse reaction. The polypeptide is Acetate kinase (Syntrophobacter fumaroxidans (strain DSM 10017 / MPOB)).